We begin with the raw amino-acid sequence, 221 residues long: Ribosomal RNA small subunit methyltransferase G (221 aa).

Residues Gly-85, Phe-90, 136-137 (AE), and Arg-149 each bind S-adenosyl-L-methionine.

It belongs to the methyltransferase superfamily. RNA methyltransferase RsmG family.

It localises to the cytoplasm. In terms of biological role, specifically methylates the N7 position of a guanine in 16S rRNA. In Porphyromonas gingivalis (strain ATCC BAA-308 / W83), this protein is Ribosomal RNA small subunit methyltransferase G.